The chain runs to 418 residues: Tyrosine--tRNA ligase (418 aa).

Position 34 (Y34) interacts with L-tyrosine. A 'HIGH' region motif is present at residues 39–48 (PTADSLHLGH). Positions 169 and 173 each coordinate L-tyrosine. A 'KMSKS' region motif is present at residues 229 to 233 (KFGKS). K232 provides a ligand contact to ATP. Positions 352–418 (HNIVELLVTA…GKKKYFVLTY (67 aa)) constitute an S4 RNA-binding domain.

It belongs to the class-I aminoacyl-tRNA synthetase family. TyrS type 1 subfamily. As to quaternary structure, homodimer.

The protein localises to the cytoplasm. The catalysed reaction is tRNA(Tyr) + L-tyrosine + ATP = L-tyrosyl-tRNA(Tyr) + AMP + diphosphate + H(+). In terms of biological role, catalyzes the attachment of tyrosine to tRNA(Tyr) in a two-step reaction: tyrosine is first activated by ATP to form Tyr-AMP and then transferred to the acceptor end of tRNA(Tyr). The protein is Tyrosine--tRNA ligase of Streptococcus mutans serotype c (strain ATCC 700610 / UA159).